Here is a 210-residue protein sequence, read N- to C-terminus: Glutathione S-transferase P (210 aa).

The region spanning 2 to 81 (PPYTIVYFPV…HLGRSLGLYG (80 aa)) is the GST N-terminal domain. At tyrosine 4 the chain carries Phosphotyrosine; by EGFR. Residues tyrosine 8, arginine 14, tryptophan 39, lysine 45, and 52–53 (QL) contribute to the glutathione site. Threonine 62 is modified (phosphothreonine). 65 to 66 (QS) serves as a coordination point for glutathione. One can recognise a GST C-terminal domain in the interval 83-204 (DQREAALVDM…SSPDHVNRPI (122 aa)). Lysine 103 and lysine 116 each carry N6-succinyllysine. Residue lysine 128 is modified to N6-acetyllysine.

This sequence belongs to the GST superfamily. Pi family. As to quaternary structure, homodimer. Interacts with CDK5.

It localises to the cytoplasm. Its subcellular location is the mitochondrion. It is found in the nucleus. The enzyme catalyses RX + glutathione = an S-substituted glutathione + a halide anion + H(+). The catalysed reaction is prostaglandin J2 + glutathione = prostaglandin J2-S-(R)-glutathione. It catalyses the reaction prostaglandin J2 + glutathione = prostaglandin J2-S-(S)-glutathione. It carries out the reaction prostaglandin A2 + glutathione = prostaglandin A2-S-(S)-glutathione. The enzyme catalyses 11(S)-hydroxy-14(S),15(S)-epoxy-(5Z,8Z,12E)-eicosatrienoate + glutathione = (11S,15S)-dihydroxy-14(R)-S-glutathionyl-(5Z,8Z,12E)-eicosatrienoate. In terms of biological role, conjugation of reduced glutathione to a wide number of exogenous and endogenous hydrophobic electrophiles. Involved in the formation of glutathione conjugates of both prostaglandin A2 (PGA2) and prostaglandin J2 (PGJ2). Participates in the formation of novel hepoxilin regioisomers. Negatively regulates CDK5 activity via p25/p35 translocation to prevent neurodegeneration. The polypeptide is Glutathione S-transferase P (GSTP1) (Cricetulus longicaudatus (Long-tailed dwarf hamster)).